A 262-amino-acid polypeptide reads, in one-letter code: MDYSKMKPSEVRNLIREGKITGPTSGMCAGYAQANLVILPKELAYDFLLFSQRNPKACPILEVSDVGSRSLRYIAEDADIAKDIPKYRVYEDGILTGEYTSVEHLWRDDFVSFLIGCSFSFESELLEAGVPVRHIEENCNVPMFITNIECEPAGIFNGKMVVSMRPIPYDQIVKSVMVTGAMPKVHGTPIHIGEPSVIGISDISKPDFGDSVNIKEGEVPVFWPCGVTPQSVVMNVKPKIVITHSPGHMLITDTKNIDIKFS.

Belongs to the D-glutamate cyclase family.

This is Putative hydro-lyase Cbei_2760 from Clostridium beijerinckii (strain ATCC 51743 / NCIMB 8052) (Clostridium acetobutylicum).